We begin with the raw amino-acid sequence, 526 residues long: MGSSSSRVLGQPRRALAQQEQGARARGSARRPDTGDDAASYGFCYCPGSHKRKRSSGACRYCDPDSHREEHEEEGDKQQPLLNTPARKKLRSTSKYIYQTLFLNGENSDIKICALGEEWRLHKIYLCQSGYFSSMFSGSWKESSMNIIELEIPDQNIDVDALQVAFGSLYRDDVLIKPSRVVAILAAACMLQLDGLIQQCGETMKETINVKTVCGYYTSVEIYGLDSVKKKCLEWLLNNLMTHQNVKLFKELGINVMKQLIGSSNLFVMQVEMDVYTTLKKWMFLQLVPSWNGSLKQLLTETDVWFSKQRKDFEGMAFLETEPGKPFVSVFRHLRLQYIISDLASARIIEQDGIVPSEWLSSVYKQQWFAMLRAEQDREVGPQEINKEDLEGNSMRCGRKLAKDGEYYWCWTGFNFGFDLLVIYTNGYIIFKRNTLNQPRSGSVSLRPRRSIAFRLRLASFDSSGKLVCSRTTGYQILILKKDQEQVVMNLDSRFLTFPLYICCNFLYISPEKGIENNRHPENPEN.

The disordered stretch occupies residues 1-85 (MGSSSSRVLG…DKQQPLLNTP (85 aa)). The Nuclear localization signal motif lies at 49–55 (SHKRKRS). Basic and acidic residues predominate over residues 62 to 77 (CDPDSHREEHEEEGDK). The short motif at 85–91 (PARKKLR) is the Nuclear localization signal element. The region spanning 108-178 (SDIKICALGE…LYRDDVLIKP (71 aa)) is the BTB domain.

In terms of assembly, interacts with CUL3. Expressed predominantly in testis.

The protein localises to the nucleus matrix. It functions in the pathway protein modification; protein ubiquitination. Functionally, possible function in spermatogenesis. Probable substrate-specific adapter of an E3 ubiquitin-protein ligase complex which mediates the ubiquitination and subsequent proteasomal degradation of target proteins. The protein is Germ cell-less protein-like 2 of Homo sapiens (Human).